Consider the following 599-residue polypeptide: Elongation factor 4 (599 aa).

In terms of domain architecture, tr-type G spans Ala-5–Lys-187. GTP is bound by residues Asp-17 to Thr-22 and Asn-134 to Asp-137.

Belongs to the TRAFAC class translation factor GTPase superfamily. Classic translation factor GTPase family. LepA subfamily.

It is found in the cell inner membrane. It carries out the reaction GTP + H2O = GDP + phosphate + H(+). In terms of biological role, required for accurate and efficient protein synthesis under certain stress conditions. May act as a fidelity factor of the translation reaction, by catalyzing a one-codon backward translocation of tRNAs on improperly translocated ribosomes. Back-translocation proceeds from a post-translocation (POST) complex to a pre-translocation (PRE) complex, thus giving elongation factor G a second chance to translocate the tRNAs correctly. Binds to ribosomes in a GTP-dependent manner. The polypeptide is Elongation factor 4 (Ruegeria pomeroyi (strain ATCC 700808 / DSM 15171 / DSS-3) (Silicibacter pomeroyi)).